The chain runs to 326 residues: MGNADLRSLAALSDVSFDDLGGSVVAVDAHNWLYRYLTTTVKFTSESKYTTSNGEEVANLIGVVQGLPKFFEHDMTPVFVFDGAVTDLKDDEVEKRREQRQKYESELEAAREAGDSTRVAKLDSRTQRLTDTIVDTTRDLLELLDVPIVDAPAEGEGQASVMARRGDVDYVGTEDYDALLFGAPMTLRQITSKGDPELMDFAATLEHHDLTWEQLVDAAILMGTDFNEGISGIGPKTAVKDLHEHGDLYTVLAARGEHIDHADRIRDLFLDPAATDDYEIPDSIEPDIDAARTFVTDQWEVDADEVARGFERIDDSVVQTGLDRWA.

An N-domain region spans residues 1-100 (MGNADLRSLA…DEVEKRREQR (100 aa)). Mg(2+) contacts are provided by Asp28, Asp82, Glu154, Glu156, Asp175, Asp177, and Asp225. The interval 118 to 246 (RVAKLDSRTQ…TAVKDLHEHG (129 aa)) is I-domain. The tract at residues 318 to 326 (VQTGLDRWA) is interaction with PCNA.

This sequence belongs to the XPG/RAD2 endonuclease family. FEN1 subfamily. Interacts with PCNA. PCNA stimulates the nuclease activity without altering cleavage specificity. Mg(2+) is required as a cofactor.

Structure-specific nuclease with 5'-flap endonuclease and 5'-3' exonuclease activities involved in DNA replication and repair. During DNA replication, cleaves the 5'-overhanging flap structure that is generated by displacement synthesis when DNA polymerase encounters the 5'-end of a downstream Okazaki fragment. Binds the unpaired 3'-DNA end and kinks the DNA to facilitate 5' cleavage specificity. Cleaves one nucleotide into the double-stranded DNA from the junction in flap DNA, leaving a nick for ligation. Also involved in the base excision repair (BER) pathway. Acts as a genome stabilization factor that prevents flaps from equilibrating into structures that lead to duplications and deletions. Also possesses 5'-3' exonuclease activity on nicked or gapped double-stranded DNA. This chain is Flap endonuclease 1, found in Haloarcula marismortui (strain ATCC 43049 / DSM 3752 / JCM 8966 / VKM B-1809) (Halobacterium marismortui).